The primary structure comprises 158 residues: Endoribonuclease YbeY (158 aa).

3 residues coordinate Zn(2+): His124, His128, and His134.

The protein belongs to the endoribonuclease YbeY family. Zn(2+) is required as a cofactor.

It is found in the cytoplasm. Functionally, single strand-specific metallo-endoribonuclease involved in late-stage 70S ribosome quality control and in maturation of the 3' terminus of the 16S rRNA. The protein is Endoribonuclease YbeY of Caldicellulosiruptor saccharolyticus (strain ATCC 43494 / DSM 8903 / Tp8T 6331).